Here is a 315-residue protein sequence, read N- to C-terminus: Glutathione synthetase (315 aa).

The 186-residue stretch at 125–310 (KLFTAWFSEF…ITGMLFDAIE (186 aa)) folds into the ATP-grasp domain. 151–207 (HQAKGDIILKPLDGMGGTSIFRVKQDDPNLGVIIETLTQYGNQYAMAQAFIPEITKG) contacts ATP. Glu-281 and Asn-283 together coordinate Mg(2+).

It belongs to the prokaryotic GSH synthase family. Mg(2+) is required as a cofactor. The cofactor is Mn(2+).

It carries out the reaction gamma-L-glutamyl-L-cysteine + glycine + ATP = glutathione + ADP + phosphate + H(+). It participates in sulfur metabolism; glutathione biosynthesis; glutathione from L-cysteine and L-glutamate: step 2/2. This chain is Glutathione synthetase, found in Shewanella oneidensis (strain ATCC 700550 / JCM 31522 / CIP 106686 / LMG 19005 / NCIMB 14063 / MR-1).